The primary structure comprises 394 residues: Phosphoglycerate kinase (394 aa).

Substrate-binding positions include 21 to 23 (DFN), Arg36, 59 to 62 (HLGR), Arg118, and Arg151. Ser183 is subject to Phosphoserine. Residues Lys201 and Gly292 each contribute to the ATP site. Thr299 is modified (phosphothreonine). ATP is bound by residues Glu323 and 350 to 353 (GGDS).

Belongs to the phosphoglycerate kinase family. As to quaternary structure, monomer.

It localises to the cytoplasm. The enzyme catalyses (2R)-3-phosphoglycerate + ATP = (2R)-3-phospho-glyceroyl phosphate + ADP. Its pathway is carbohydrate degradation; glycolysis; pyruvate from D-glyceraldehyde 3-phosphate: step 2/5. The chain is Phosphoglycerate kinase from Bacillus cereus (strain B4264).